We begin with the raw amino-acid sequence, 500 residues long: Protein farnesyltransferase subunit beta (500 aa).

The segment at 117 to 140 is disordered; it reads LQNDDNNGNNNNRENNQNGGGFGG. Low complexity predominate over residues 119–133; the sequence is NDDNNGNNNNRENNQ. 5 PFTB repeats span residues 121 to 162, 172 to 213, 220 to 261, 268 to 309, and 343 to 384; these read DNNG…YVIG, REAM…SMLN, ERGV…SILN, MNSL…IIIQ, and QEYV…SLSQ. Residues 246–249 and 288–291 each bind (2E,6E)-farnesyl diphosphate; these read HGGY and RTNK. Asp-294 and Cys-296 together coordinate Zn(2+). 297–300 serves as a coordination point for (2E,6E)-farnesyl diphosphate; the sequence is YSYW. Position 372 (His-372) interacts with Zn(2+). Positions 402-451 are disordered; that stretch reads FEQPSPPINKKSTNVFTISNNNNNNNNKNNNSDDNNNNSNNNNNNSENQL. Residues 420-449 show a composition bias toward low complexity; the sequence is SNNNNNNNNKNNNSDDNNNNSNNNNNNSEN.

The protein belongs to the protein prenyltransferase subunit beta family. As to quaternary structure, heterodimer of fntA and fntB (farnesyltransferase). Heterodimer of an alpha and a beta subunit. Zn(2+) is required as a cofactor.

The enzyme catalyses L-cysteinyl-[protein] + (2E,6E)-farnesyl diphosphate = S-(2E,6E)-farnesyl-L-cysteinyl-[protein] + diphosphate. Functionally, catalyzes the transfer of a farnesyl moiety from farnesyl diphosphate to a cysteine at the fourth position from the C-terminus of several proteins. The beta subunit is responsible for peptide-binding. In Dictyostelium discoideum (Social amoeba), this protein is Protein farnesyltransferase subunit beta (fntB).